Here is a 171-residue protein sequence, read N- to C-terminus: Small ribosomal subunit protein uS5 (171 aa).

The S5 DRBM domain maps to 13-76 (FLERLVAVNR…DQAKKNLVTI (64 aa)).

It belongs to the universal ribosomal protein uS5 family. In terms of assembly, part of the 30S ribosomal subunit. Contacts proteins S4 and S8.

In terms of biological role, with S4 and S12 plays an important role in translational accuracy. Functionally, located at the back of the 30S subunit body where it stabilizes the conformation of the head with respect to the body. The protein is Small ribosomal subunit protein uS5 of Dichelobacter nodosus (strain VCS1703A).